The primary structure comprises 68 residues: U-scoloptoxin(02)-Er1a (68 aa).

The N-terminal stretch at 1-20 is a signal peptide; that stretch reads MIVSLRCCLLLVALLITVET. 3 disulfides stabilise this stretch: Cys30–Cys52, Cys38–Cys58, and Cys42–Cys60.

This sequence belongs to the invertebrate defensin family. In terms of tissue distribution, expressed by the venom gland.

The protein localises to the secreted. Its function is as follows. Antibacterial peptide mostly active against Gram-positive bacteria. In Ethmostigmus rubripes (Giant centipede), this protein is U-scoloptoxin(02)-Er1a.